Here is a 362-residue protein sequence, read N- to C-terminus: Phosphoserine aminotransferase (362 aa).

2 residues coordinate L-glutamate: Ser-9 and Arg-42. Residues 76–77 (GR), Trp-102, Thr-153, Asp-174, and Gln-197 contribute to the pyridoxal 5'-phosphate site. Lys-198 carries the N6-(pyridoxal phosphate)lysine modification. Position 239-240 (239-240 (NT)) interacts with pyridoxal 5'-phosphate.

This sequence belongs to the class-V pyridoxal-phosphate-dependent aminotransferase family. SerC subfamily. Homodimer. Requires pyridoxal 5'-phosphate as cofactor.

It is found in the cytoplasm. The catalysed reaction is O-phospho-L-serine + 2-oxoglutarate = 3-phosphooxypyruvate + L-glutamate. It carries out the reaction 4-(phosphooxy)-L-threonine + 2-oxoglutarate = (R)-3-hydroxy-2-oxo-4-phosphooxybutanoate + L-glutamate. It functions in the pathway amino-acid biosynthesis; L-serine biosynthesis; L-serine from 3-phospho-D-glycerate: step 2/3. Its pathway is cofactor biosynthesis; pyridoxine 5'-phosphate biosynthesis; pyridoxine 5'-phosphate from D-erythrose 4-phosphate: step 3/5. Its function is as follows. Catalyzes the reversible conversion of 3-phosphohydroxypyruvate to phosphoserine and of 3-hydroxy-2-oxo-4-phosphonooxybutanoate to phosphohydroxythreonine. The sequence is that of Phosphoserine aminotransferase from Shigella boydii serotype 4 (strain Sb227).